The chain runs to 305 residues: Putative lipid kinase SaurJH9_0749 (305 aa).

Residues 3–139 (NKYTHGVLFY…YDVIKINNQY (137 aa)) form the DAGKc domain. ATP is bound by residues Ser-44, 74 to 80 (GDGTVNE), and Thr-101. Mg(2+)-binding residues include Ser-220, Asp-223, and Glu-225. Glu-281 functions as the Proton acceptor in the catalytic mechanism.

It belongs to the diacylglycerol/lipid kinase family. Mg(2+) is required as a cofactor.

In terms of biological role, may catalyze the ATP-dependent phosphorylation of lipids other than diacylglycerol (DAG). This Staphylococcus aureus (strain JH9) protein is Putative lipid kinase SaurJH9_0749.